We begin with the raw amino-acid sequence, 490 residues long: Serine palmitoyltransferase 2 (490 aa).

A helical transmembrane segment spans residues 10–30 (VDDVGYLPILFLYIAYAFIIF). Lys321 is modified (N6-(pyridoxal phosphate)lysine).

Belongs to the class-II pyridoxal-phosphate-dependent aminotransferase family. Forms a heterodimer with sptA. The cofactor is pyridoxal 5'-phosphate.

The protein resides in the endoplasmic reticulum membrane. The enzyme catalyses L-serine + hexadecanoyl-CoA + H(+) = 3-oxosphinganine + CO2 + CoA. It participates in lipid metabolism; sphingolipid metabolism. Catalytic subunit of serine palmitoyltransferase (SPT), which catalyzes the committed step in the synthesis of sphingolipids, the condensation of serine with palmitoyl CoA to form the long chain base 3-ketosphinganine. The polypeptide is Serine palmitoyltransferase 2 (sptB) (Dictyostelium discoideum (Social amoeba)).